We begin with the raw amino-acid sequence, 146 residues long: Hemoglobin subunit beta (146 aa).

Valine 1 carries the post-translational modification N-acetylvaline. Residues 2-146 (HLTGEEKAAV…VANALAHKYH (145 aa)) enclose the Globin domain. A Phosphothreonine modification is found at threonine 12. Serine 44 bears the Phosphoserine mark. Residue lysine 59 is modified to N6-acetyllysine. Histidine 63 contributes to the heme b binding site. Residue lysine 82 is modified to N6-acetyllysine. A heme b-binding site is contributed by histidine 92. The residue at position 93 (cysteine 93) is an S-nitrosocysteine. N6-acetyllysine is present on lysine 144.

It belongs to the globin family. In terms of assembly, heterotetramer of two alpha chains and two beta chains. As to expression, red blood cells.

Involved in oxygen transport from the lung to the various peripheral tissues. This Mustela putorius furo (European domestic ferret) protein is Hemoglobin subunit beta (HBB).